The following is a 318-amino-acid chain: tRNA uridine(34) hydroxylase (318 aa).

The 95-residue stretch at E123–E217 folds into the Rhodanese domain. C177 serves as the catalytic Cysteine persulfide intermediate.

Belongs to the TrhO family.

It carries out the reaction uridine(34) in tRNA + AH2 + O2 = 5-hydroxyuridine(34) in tRNA + A + H2O. Catalyzes oxygen-dependent 5-hydroxyuridine (ho5U) modification at position 34 in tRNAs. The sequence is that of tRNA uridine(34) hydroxylase from Staphylococcus aureus (strain MSSA476).